Consider the following 438-residue polypeptide: GTPase Der (438 aa).

EngA-type G domains lie at 4–168 (PIVA…PAVP) and 176–351 (LKVA…EAAN). GTP contacts are provided by residues 10–17 (GRPNVGKS), 57–61 (DTGGI), 120–123 (NKVE), 182–189 (GRPNVGKS), 229–233 (DTAGM), and 294–297 (NKWD). Positions 352–436 (RRVATGTLNA…PIRLIFRRGR (85 aa)) constitute a KH-like domain.

It belongs to the TRAFAC class TrmE-Era-EngA-EngB-Septin-like GTPase superfamily. EngA (Der) GTPase family. As to quaternary structure, associates with the 50S ribosomal subunit.

GTPase that plays an essential role in the late steps of ribosome biogenesis. The polypeptide is GTPase Der (Moorella thermoacetica (strain ATCC 39073 / JCM 9320)).